Reading from the N-terminus, the 915-residue chain is MSNRDNESMLRTTSSDKAIASQRDKRKSEVLIAAQSLDNEIRSVKNLKRLSIGSMDLLIDPELDIKFGGESSGRRSWSGTTSSSASMPSDTTTVNNTRYSDPTPLENLHGRGNSGIESSNKTKQGNYLGIKKGVHSPSRKLNANVLKKNLLWVPANQHPNVKPDNFLELVQDTLQNIQLSDNGEDNDGNSNENNDIEDNGEDKESQSYENKENNTINLNRGLSRHGNASLIRRPSTLRRSYTEFDDNEDDDNKGDSASETVNKVEERISKIKERPVSLRDITEELTKISNSAGLTDNDAITLARTLSMAGSYSDKKDQPQPEGHYDEGDIGFSTSQANTLDDGEFASNMPINNTMTWPERSSLRRSRFNTYRIRSQEQEKEVEQSVDEMKNDDEERLKLTKNTIKVEIDPHKSPFRQQDEDSENMSSPGSIGDFQDIYNHYRQSSGEWEQEMGIEKEAEEVPVKVRNDTVEQDLELREGTTDMVKPSATDDNKETKRHRRRNGWTWLNNKMSREDDNEENQGDDENEENVDSQRMELDNSKKHYISLFNGGEKTEVSNKEEMNNSSTSTATSQTRQKIEKTFANLFRRKPHHKHDASSSPSSSPSSSPSIPNNDAVHVRVRKSKKLGNKSGREPVEPIVLRNRPRPHRHHHSRHGSQKISVKTLKDSQPQQQIPLQPQLEGAIEIEKKEESDSESLPQLQPAVSVSSTKSNSRDREEEEAKKKNKKRSNTTEISNQQHSKHVQKENTDEQKAQLQAPAQEQVQTSVPVQASAPVQNSAPVQTSAPVEASAQTQAPAAPPLKHTSILPPRKLTFADVKKPDKPNSPVQFTDSAFGFPLPLLTVSTVIMFDHRLPINVERAIYRLSHLKLSNSKRGLREQVLLSNFMYAYLNLVNHTLYMEQVAHDKEQQQQQQQQP.

6 disordered regions span residues 1-28, 69-134, 179-261, 310-330, 412-433, and 464-807; these read MSNR…KRKS, GESS…KKGV, LSDN…SETV, GSYS…EGDI, KSPF…SIGD, and KVRN…SILP. Over residues 74–93 the composition is skewed to low complexity; that stretch reads RRSWSGTTSSSASMPSDTTT. Polar residues predominate over residues 115–125; sequence GIESSNKTKQG. Basic and acidic residues predominate over residues 202 to 212; the sequence is DKESQSYENKE. S229 carries the post-translational modification Phosphoserine. A compositionally biased stretch (acidic residues) spans 243-252; sequence EFDDNEDDDN. Basic and acidic residues predominate over residues 313–327; that stretch reads SDKKDQPQPEGHYDE. The span at 464–480 shows a compositional bias: basic and acidic residues; it reads KVRNDTVEQDLELREGT. The span at 515–530 shows a compositional bias: acidic residues; the sequence is DDNEENQGDDENEENV. 2 stretches are compositionally biased toward basic and acidic residues: residues 531–541 and 552–562; these read DSQRMELDNSK and EKTEVSNKEEM. Composition is skewed to low complexity over residues 565-574 and 597-609; these read SSTSTATSQT and SSSP…SSPS. Composition is skewed to basic residues over residues 618-627 and 642-656; these read VRVRKSKKLG and NRPR…RHGS. The segment covering 668–679 has biased composition (low complexity); sequence QPQQQIPLQPQL. The segment covering 696 to 710 has biased composition (polar residues); it reads LPQLQPAVSVSSTKS. Basic and acidic residues-rich tracts occupy residues 711–721 and 742–751; these read NSRDREEEEAK and VQKENTDEQK. A compositionally biased stretch (polar residues) spans 752-793; the sequence is AQLQAPAQEQVQTSVPVQASAPVQNSAPVQTSAPVEASAQTQ.

This sequence to yeast ZDS2/MCS1. In terms of assembly, interacts with BCY1, DBP5, GFD1 and SKG6.

The protein resides in the cytoplasm. Has a role in establishing cell polarity. Together with cAMP-dependent protein kinase regulatory subunit BCY1, provides a negative feedback control on the cell wall integrity-signaling pathway by acting as a negative regulator of MAP kinase SLT2/MPK1. In heat-stressed cells appears to play a role in localizing BCY1 to the cytoplasm. Seems to interact with, and down-regulate, CDC42. Also acts as a suppressor of PKC1. May act as an integration point for distinct signaling pathways helping to maintain a balance among these different pathways. In terms of biological role, when associated with DBP5, GFD1 and nucleoporins at the cytosolic fibrils of the nuclear pore complex, is required for mRNA export form the nucleus. This is Protein ZDS1 (ZDS1) from Saccharomyces cerevisiae (strain ATCC 204508 / S288c) (Baker's yeast).